The sequence spans 88 residues: Monensin polyketide synthase acyl carrier protein (88 aa).

In terms of domain architecture, Carrier spans 5-82; that stretch reads PFTLADLQRI…ELIDHVNERL (78 aa). Ser42 carries the O-(pantetheine 4'-phosphoryl)serine modification.

Post-translationally, 4'-phosphopantetheine is transferred from CoA to a specific serine of the apo-ACP-like protein.

It functions in the pathway antifungal biosynthesis; monensin biosynthesis. Acyl carrier protein. This is Monensin polyketide synthase acyl carrier protein from Streptomyces virginiae (Streptomyces cinnamonensis).